A 138-amino-acid polypeptide reads, in one-letter code: Histone H2B.4 (138 aa).

A compositionally biased stretch (basic and acidic residues) spans 1–39 (MAPKAAEKKPAEKKPAGKAPAEKLPKAEKKISKDAGGSE). The interval 1–48 (MAPKAAEKKPAEKKPAGKAPAEKLPKAEKKISKDAGGSEKKKKKSKKS) is disordered. A N,N,N-trimethylalanine; alternate modification is found at A2. N,N-dimethylalanine; alternate is present on A2. The residue at position 2 (A2) is an N-methylalanine; alternate. The residue at position 4 (K4) is an N6-methyllysine. N6-acetyllysine occurs at positions 8 and 13. Residue K14 is modified to N6,N6-dimethyllysine. N6-acetyllysine occurs at positions 18, 23, 29, and 30. K135 is covalently cross-linked (Glycyl lysine isopeptide (Lys-Gly) (interchain with G-Cter in ubiquitin)).

Belongs to the histone H2B family. As to quaternary structure, the nucleosome is a histone octamer containing two molecules each of H2A, H2B, H3 and H4 assembled in one H3-H4 heterotetramer and two H2A-H2B heterodimers. The octamer wraps approximately 147 bp of DNA. Post-translationally, can be acetylated to form H2BK6ac, H2BK33ac and H2BK34ac. In terms of processing, monoubiquitinated by BRE1 to form H2BK143ub1 and deubiquitinated by UBP26. Required for heterochromatic histone H3 di- and trimethylation at H3K4me. May give a specific tag for epigenetic transcriptional activation.

The protein localises to the nucleus. The protein resides in the chromosome. Functionally, core component of nucleosome. Nucleosomes wrap and compact DNA into chromatin, limiting DNA accessibility to the cellular machineries which require DNA as a template. Histones thereby play a central role in transcription regulation, DNA repair, DNA replication and chromosomal stability. DNA accessibility is regulated via a complex set of post-translational modifications of histones, also called histone code, and nucleosome remodeling. The sequence is that of Histone H2B.4 from Arabidopsis thaliana (Mouse-ear cress).